The primary structure comprises 301 residues: Acetylglutamate kinase (301 aa).

Residues 76–77 (GG), R98, and N192 each bind substrate.

This sequence belongs to the acetylglutamate kinase family. ArgB subfamily.

Its subcellular location is the cytoplasm. It carries out the reaction N-acetyl-L-glutamate + ATP = N-acetyl-L-glutamyl 5-phosphate + ADP. Its pathway is amino-acid biosynthesis; L-arginine biosynthesis; N(2)-acetyl-L-ornithine from L-glutamate: step 2/4. In terms of biological role, catalyzes the ATP-dependent phosphorylation of N-acetyl-L-glutamate. The chain is Acetylglutamate kinase from Chlorobaculum parvum (strain DSM 263 / NCIMB 8327) (Chlorobium vibrioforme subsp. thiosulfatophilum).